The chain runs to 116 residues: MTEQAEDALPIRFTDAAASKVKTLLEEEENDALKLRVYVTGGGCSGFQYGFTFDEKVNEGDFTVEKQGVQLVVDPMSLQYLVGGEVDYTSGLEGSRFFVKNPNATTTCGCGASFSV.

Positions 44, 108, and 110 each coordinate iron-sulfur cluster.

The protein belongs to the HesB/IscA family. In terms of assembly, homodimer. Requires iron-sulfur cluster as cofactor.

Its function is as follows. Required for insertion of 4Fe-4S clusters for at least IspG. In Shewanella pealeana (strain ATCC 700345 / ANG-SQ1), this protein is Iron-sulfur cluster insertion protein ErpA.